The chain runs to 792 residues: Kinesin-associated protein 3 (792 aa).

At Ser60 the chain carries Phosphoserine. Residues 103–119 (LSGKEKKEKSSKPKDPP) show a composition bias toward basic and acidic residues. Residues 103-124 (LSGKEKKEKSSKPKDPPPFEGM) form a disordered region. ARM repeat units follow at residues 333 to 373 (FMEN…NLSF), 374 to 412 (DTGL…HISM), 494 to 533 (DGPT…NLTI), 578 to 620 (DDSC…QMVF), and 621 to 662 (HQAT…IIAE).

Heterotrimer of KIFAP3, KIF3A and KIF3B. Interacts with RAP1GDS1/SMG GDS. Interacts with SMC3 subunit of the cohesin complex. Post-translationally, phosphorylated on tyrosine residues by SRC in vitro; this reduces the binding affinity of the protein for RAP1GDS1.

Functionally, involved in tethering the chromosomes to the spindle pole and in chromosome movement. Binds to the tail domain of the KIF3A/KIF3B heterodimer to form a heterotrimeric KIF3 complex and may regulate the membrane binding of this complex. The polypeptide is Kinesin-associated protein 3 (KIFAP3) (Homo sapiens (Human)).